We begin with the raw amino-acid sequence, 247 residues long: Uridylate kinase (247 aa).

18–21 (KLSG) provides a ligand contact to ATP. Gly-60 provides a ligand contact to UMP. Residues Gly-61 and Arg-65 each contribute to the ATP site. UMP contacts are provided by residues Asp-80 and 141–148 (TGNPFFTT). The ATP site is built by Thr-168, Tyr-174, and Asp-177.

This sequence belongs to the UMP kinase family. In terms of assembly, homohexamer.

Its subcellular location is the cytoplasm. It carries out the reaction UMP + ATP = UDP + ADP. It participates in pyrimidine metabolism; CTP biosynthesis via de novo pathway; UDP from UMP (UMPK route): step 1/1. With respect to regulation, inhibited by UTP. Catalyzes the reversible phosphorylation of UMP to UDP. This is Uridylate kinase from Pseudomonas fluorescens (strain ATCC BAA-477 / NRRL B-23932 / Pf-5).